We begin with the raw amino-acid sequence, 207 residues long: dITP/XTP pyrophosphatase (207 aa).

10–15 (TRNAGK) is a substrate binding site. Mg(2+)-binding residues include E43 and D72. The active-site Proton acceptor is D72. Substrate-binding positions include S73, 161–164 (FGYD), K184, and 189–190 (HR).

The protein belongs to the HAM1 NTPase family. As to quaternary structure, homodimer. Requires Mg(2+) as cofactor.

The catalysed reaction is XTP + H2O = XMP + diphosphate + H(+). It catalyses the reaction dITP + H2O = dIMP + diphosphate + H(+). The enzyme catalyses ITP + H2O = IMP + diphosphate + H(+). Functionally, pyrophosphatase that catalyzes the hydrolysis of nucleoside triphosphates to their monophosphate derivatives, with a high preference for the non-canonical purine nucleotides XTP (xanthosine triphosphate), dITP (deoxyinosine triphosphate) and ITP. Seems to function as a house-cleaning enzyme that removes non-canonical purine nucleotides from the nucleotide pool, thus preventing their incorporation into DNA/RNA and avoiding chromosomal lesions. The chain is dITP/XTP pyrophosphatase from Nitratidesulfovibrio vulgaris (strain ATCC 29579 / DSM 644 / CCUG 34227 / NCIMB 8303 / VKM B-1760 / Hildenborough) (Desulfovibrio vulgaris).